A 173-amino-acid polypeptide reads, in one-letter code: Crossover junction endodeoxyribonuclease RuvC (173 aa).

Catalysis depends on residues D11, E71, and D143. Mg(2+)-binding residues include D11, E71, and D143.

Belongs to the RuvC family. As to quaternary structure, homodimer which binds Holliday junction (HJ) DNA. The HJ becomes 2-fold symmetrical on binding to RuvC with unstacked arms; it has a different conformation from HJ DNA in complex with RuvA. In the full resolvosome a probable DNA-RuvA(4)-RuvB(12)-RuvC(2) complex forms which resolves the HJ. Mg(2+) serves as cofactor.

It localises to the cytoplasm. It carries out the reaction Endonucleolytic cleavage at a junction such as a reciprocal single-stranded crossover between two homologous DNA duplexes (Holliday junction).. Functionally, the RuvA-RuvB-RuvC complex processes Holliday junction (HJ) DNA during genetic recombination and DNA repair. Endonuclease that resolves HJ intermediates. Cleaves cruciform DNA by making single-stranded nicks across the HJ at symmetrical positions within the homologous arms, yielding a 5'-phosphate and a 3'-hydroxyl group; requires a central core of homology in the junction. The consensus cleavage sequence is 5'-(A/T)TT(C/G)-3'. Cleavage occurs on the 3'-side of the TT dinucleotide at the point of strand exchange. HJ branch migration catalyzed by RuvA-RuvB allows RuvC to scan DNA until it finds its consensus sequence, where it cleaves and resolves the cruciform DNA. The sequence is that of Crossover junction endodeoxyribonuclease RuvC from Brucella abortus (strain 2308).